The primary structure comprises 419 residues: UDP-N-acetylglucosamine 1-carboxyvinyltransferase (419 aa).

22–23 is a phosphoenolpyruvate binding site; that stretch reads KN. Residue R91 participates in UDP-N-acetyl-alpha-D-glucosamine binding. The active-site Proton donor is C115. Residue C115 is modified to 2-(S-cysteinyl)pyruvic acid O-phosphothioketal. Residues 120-124, 160-163, D305, and I327 each bind UDP-N-acetyl-alpha-D-glucosamine; these read RPVDL and KVSV.

This sequence belongs to the EPSP synthase family. MurA subfamily.

Its subcellular location is the cytoplasm. The catalysed reaction is phosphoenolpyruvate + UDP-N-acetyl-alpha-D-glucosamine = UDP-N-acetyl-3-O-(1-carboxyvinyl)-alpha-D-glucosamine + phosphate. Its pathway is cell wall biogenesis; peptidoglycan biosynthesis. Functionally, cell wall formation. Adds enolpyruvyl to UDP-N-acetylglucosamine. The chain is UDP-N-acetylglucosamine 1-carboxyvinyltransferase from Sodalis glossinidius (strain morsitans).